The primary structure comprises 217 residues: GTP cyclohydrolase 1 (217 aa).

Positions 109, 112, and 180 each coordinate Zn(2+).

Belongs to the GTP cyclohydrolase I family. As to quaternary structure, toroid-shaped homodecamer, composed of two pentamers of five dimers.

It carries out the reaction GTP + H2O = 7,8-dihydroneopterin 3'-triphosphate + formate + H(+). It participates in cofactor biosynthesis; 7,8-dihydroneopterin triphosphate biosynthesis; 7,8-dihydroneopterin triphosphate from GTP: step 1/1. This Vibrio parahaemolyticus serotype O3:K6 (strain RIMD 2210633) protein is GTP cyclohydrolase 1.